We begin with the raw amino-acid sequence, 81 residues long: CLAVATA3/ESR (CLE)-related protein 6 (81 aa).

The N-terminal stretch at 1 to 26 (MANLILKQSLIILLIIYSTPILSSQA) is a signal peptide. A hydroxyproline mark is found at Pro73 and Pro76. O-linked (Ara...) hydroxyproline glycosylation is present at Pro76.

This sequence belongs to the CLV3/ESR signal peptide family. The O-glycosylation (arabinosylation) of the hydroxyproline Pro-76 enhances binding affinity of the CLE6p peptide for its receptor. Mostly expressed in roots, seedlings, stems and flowers, and, to a lower extent, in apex and siliques.

Its subcellular location is the secreted. The protein resides in the extracellular space. Its function is as follows. Extracellular signal peptide that regulates cell fate. This Arabidopsis thaliana (Mouse-ear cress) protein is CLAVATA3/ESR (CLE)-related protein 6.